Reading from the N-terminus, the 454-residue chain is Guanine deaminase (454 aa).

Zn(2+) contacts are provided by His82 and His84. Residues 84–87 (HAPQ), 213–214 (RF), 240–243 (HISE), and Asp330 each bind substrate. Zn(2+)-binding residues include His240 and Asp330. Ser453 carries the post-translational modification Phosphoserine.

The protein belongs to the metallo-dependent hydrolases superfamily. ATZ/TRZ family. As to quaternary structure, homodimer. It depends on Zn(2+) as a cofactor.

It carries out the reaction guanine + H2O + H(+) = xanthine + NH4(+). The protein operates within purine metabolism; guanine degradation; xanthine from guanine: step 1/1. Catalyzes the hydrolytic deamination of guanine, producing xanthine and ammonia. The protein is Guanine deaminase of Mus musculus (Mouse).